A 407-amino-acid polypeptide reads, in one-letter code: Phosphopentomutase (407 aa).

Residues aspartate 10, aspartate 306, histidine 311, aspartate 347, histidine 348, and histidine 359 each coordinate Mn(2+).

It belongs to the phosphopentomutase family. Requires Mn(2+) as cofactor.

Its subcellular location is the cytoplasm. The enzyme catalyses 2-deoxy-alpha-D-ribose 1-phosphate = 2-deoxy-D-ribose 5-phosphate. It catalyses the reaction alpha-D-ribose 1-phosphate = D-ribose 5-phosphate. It participates in carbohydrate degradation; 2-deoxy-D-ribose 1-phosphate degradation; D-glyceraldehyde 3-phosphate and acetaldehyde from 2-deoxy-alpha-D-ribose 1-phosphate: step 1/2. Its function is as follows. Isomerase that catalyzes the conversion of deoxy-ribose 1-phosphate (dRib-1-P) and ribose 1-phosphate (Rib-1-P) to deoxy-ribose 5-phosphate (dRib-5-P) and ribose 5-phosphate (Rib-5-P), respectively. This is Phosphopentomutase from Pectobacterium atrosepticum (strain SCRI 1043 / ATCC BAA-672) (Erwinia carotovora subsp. atroseptica).